The sequence spans 318 residues: Taste receptor type 2 member 60 (318 aa).

The Extracellular segment spans residues 1–7 (MNGDHMV). A helical transmembrane segment spans residues 8 to 28 (LGSSVTDKKAIILVTILLLLR). The Cytoplasmic portion of the chain corresponds to 29 to 40 (LVAIAGNGFIIA). The helical transmembrane segment at 41-61 (ALGVEWVLRRMLLPCDXLLVS) threads the bilayer. The Extracellular segment spans residues 62–88 (LGASRFCLQSVVMGKTIYVFLHPMAFP). A helical transmembrane segment spans residues 89–109 (YNPVLQFLAFQWDFLNAATLW). The Cytoplasmic portion of the chain corresponds to 110–128 (FSTWLSVFYCVKIAAFTHP). Residues 129 to 149 (VFLWLKHKLSGWLPWILFSSV) traverse the membrane as a helical segment. Residues 150-183 (GLSSFTTILFFIGNHRMYQNYLRNHLQPWNITGN) lie on the Extracellular side of the membrane. N-linked (GlcNAc...) asparagine glycosylation occurs at N179. The helical transmembrane segment at 184–204 (SIRSYCEKFYLFPLKMITWTM) threads the bilayer. Residues 205 to 234 (PTAVFFICMILLITSLGRHMKKALLTTSGF) lie on the Cytoplasmic side of the membrane. A helical transmembrane segment spans residues 235 to 255 (REPSMQAHIKALLALLSFAML). Topologically, residues 256–264 (FISYFLSLV) are extracellular. The helical transmembrane segment at 265-285 (FSAAGIFPPLDFKFWVWESVI) threads the bilayer. At 286 to 318 (YLCAAVHPIILLFSNCRLRAVLKSCRSSRCGTP) the chain is on the cytoplasmic side.

The protein belongs to the G-protein coupled receptor T2R family.

The protein resides in the membrane. Receptor that may play a role in the perception of bitterness and is gustducin-linked. May play a role in sensing the chemical composition of the gastrointestinal content. The activity of this receptor may stimulate alpha gustducin, mediate PLC-beta-2 activation and lead to the gating of TRPM5. This is Taste receptor type 2 member 60 (TAS2R60) from Gorilla gorilla gorilla (Western lowland gorilla).